A 153-amino-acid polypeptide reads, in one-letter code: Ribosomal RNA large subunit methyltransferase H (153 aa).

Residues Leu-71, Gly-102, and 121 to 126 each bind S-adenosyl-L-methionine; that span reads LSRMTL.

This sequence belongs to the RNA methyltransferase RlmH family. Homodimer.

The protein localises to the cytoplasm. The catalysed reaction is pseudouridine(1915) in 23S rRNA + S-adenosyl-L-methionine = N(3)-methylpseudouridine(1915) in 23S rRNA + S-adenosyl-L-homocysteine + H(+). In terms of biological role, specifically methylates the pseudouridine at position 1915 (m3Psi1915) in 23S rRNA. This chain is Ribosomal RNA large subunit methyltransferase H, found in Anaeromyxobacter sp. (strain Fw109-5).